The sequence spans 437 residues: Nuclear hormone receptor family member nhr-100 (437 aa).

The segment at residues 21–96 (DTSCLVCGDP…VGMDANAVRS (76 aa)) is a DNA-binding region (nuclear receptor). NR C4-type zinc fingers lie at residues 24–44 (CLVCGDPHGKRHYGAMSCNGC) and 60–79 (CSFNNECIIEFKYRNRCRAC). An NR LBD domain is found at 141–409 (QTKEIIAHML…SGGGLPYDIH (269 aa)).

The protein belongs to the nuclear hormone receptor family.

Its subcellular location is the nucleus. In terms of biological role, orphan nuclear receptor. The polypeptide is Nuclear hormone receptor family member nhr-100 (nhr-100) (Caenorhabditis elegans).